Consider the following 341-residue polypeptide: KH domain-containing RNA-binding protein QKI (341 aa).

The interval 11 to 82 (PNPTPDYLMQ…PDAVGPIVQL (72 aa)) is qua1 domain; involved in homodimerization. Positions 87–153 (YVPVKEYPDF…WEHLNEDLHV (67 aa)) constitute a KH domain. Positions 182 to 213 (AAEGEDSLKKMQLMELAILNGTYRDANIKSPA) are qua2 domain; involved in RNA binding. Ser-188 is subject to Phosphoserine. Arg-227 bears the Omega-N-methylarginine mark. Arg-242 bears the Asymmetric dimethylarginine; by CARM1; alternate mark. Position 242 is an omega-N-methylarginine; alternate (Arg-242). Arg-256 carries the omega-N-methylarginine modification. The short motif at 276–279 (PPGP) is the SH3-binding element. The Nuclear localization signal motif lies at 324–330 (RVHPYQR).

Belongs to the quaking family. As to quaternary structure, homodimer; does not require RNA to homodimerize. Able to heterodimerize with BICC1. Methylated by PRMT1. Post-translationally, tyrosine phosphorylated at its C-terminus, probably by FYN. Phosphorylation leads to decreased mRNA-binding affinity, affecting transport and/or stabilization of MBP mRNA. In terms of processing, ubiquitinated by RNF6 in macrophages, leading to its degradation. In terms of tissue distribution, present in myelinating oligodendrocytes (at protein level).

It localises to the nucleus. The protein resides in the cytoplasm. In terms of biological role, RNA reader protein, which recognizes and binds specific RNAs, thereby regulating RNA metabolic processes, such as pre-mRNA splicing, circular RNA (circRNA) formation, mRNA export, mRNA stability and/or translation. Involved in various cellular processes, such as mRNA storage into stress granules, apoptosis, lipid deposition, interferon response, glial cell fate and development. Binds to the 5'-NACUAAY-N(1,20)-UAAY-3' RNA core sequence. Acts as a mRNA modification reader that specifically recognizes and binds mRNA transcripts modified by internal N(7)-methylguanine (m7G). Promotes the formation of circular RNAs (circRNAs) during the epithelial to mesenchymal transition and in cardiomyocytes: acts by binding to sites flanking circRNA-forming exons. CircRNAs are produced by back-splicing circularization of pre-mRNAs. Plays a central role in myelinization via 3 distinct mechanisms. First, acts by protecting and promoting stability of target mRNAs such as MBP, SIRT2 and CDKN1B, which promotes oligodendrocyte differentiation. Second, participates in mRNA transport by regulating the nuclear export of MBP mRNA. Finally, indirectly regulates mRNA splicing of MAG pre-mRNA during oligodendrocyte differentiation by acting as a negative regulator of MAG exon 12 alternative splicing: acts by binding to HNRNPA1 mRNA splicing factor, preventing its translation. Involved in microglia differentiation and remyelination by regulating microexon alternative splicing of the Rho GTPase pathway. Involved in macrophage differentiation: promotes monocyte differentiation by regulating pre-mRNA splicing in naive peripheral blood monocytes. Acts as an important regulator of muscle development: required for the contractile function of cardiomyocytes by regulating alternative splicing of cardiomyocyte transcripts. Acts as a negative regulator of thermogenesis by decreasing stability, nuclear export and translation of mRNAs encoding PPARGC1A and UCP1. Also required for visceral endoderm function and blood vessel development. May also play a role in smooth muscle development. In addition to its RNA-binding activity, also acts as a nuclear transcription coactivator for SREBF2/SREBP2. This chain is KH domain-containing RNA-binding protein QKI, found in Rattus norvegicus (Rat).